Here is a 313-residue protein sequence, read N- to C-terminus: MQFEFQIEELEHKIEELKKFAEEKEVDLSDEIAKLKDQRDIALKVLYDDLTDYQRVMVSRHPERPYTLDYINYITTDFIELHGDRLFRDDPAIVGGLCKIDGKNFMIIGHQKGRTMQEKVFRNFGMANPEGYRKALRLYEMAERFKLPILTFIDTPGAYPGLEAEKHGQGEAIARNLMEMSGIKTPIVSIVIGEGGSGGALGLGVADKVFMLENSVYSVISPEGCAAILYKDPNRVEEAANNLKLSSQSLLKIGLIDGIIDEALGGAHRGPEDTAFNLKNVVLEAVNELEKLPVDELVEKRYEKFRQMGVFNR.

In terms of domain architecture, CoA carboxyltransferase C-terminal spans 34 to 288; the sequence is KLKDQRDIAL…KNVVLEAVNE (255 aa).

Belongs to the AccA family. Acetyl-CoA carboxylase is a heterohexamer composed of biotin carboxyl carrier protein (AccB), biotin carboxylase (AccC) and two subunits each of ACCase subunit alpha (AccA) and ACCase subunit beta (AccD).

It is found in the cytoplasm. It carries out the reaction N(6)-carboxybiotinyl-L-lysyl-[protein] + acetyl-CoA = N(6)-biotinyl-L-lysyl-[protein] + malonyl-CoA. It participates in lipid metabolism; malonyl-CoA biosynthesis; malonyl-CoA from acetyl-CoA: step 1/1. Its function is as follows. Component of the acetyl coenzyme A carboxylase (ACC) complex. First, biotin carboxylase catalyzes the carboxylation of biotin on its carrier protein (BCCP) and then the CO(2) group is transferred by the carboxyltransferase to acetyl-CoA to form malonyl-CoA. The polypeptide is Acetyl-coenzyme A carboxylase carboxyl transferase subunit alpha (Fusobacterium nucleatum subsp. nucleatum (strain ATCC 25586 / DSM 15643 / BCRC 10681 / CIP 101130 / JCM 8532 / KCTC 2640 / LMG 13131 / VPI 4355)).